We begin with the raw amino-acid sequence, 331 residues long: Adenosine deaminase (331 aa).

Zn(2+) is bound by residues His-12 and His-14. His-14, Asp-16, and Gly-170 together coordinate substrate. His-197 provides a ligand contact to Zn(2+). The active-site Proton donor is Glu-200. Asp-278 contributes to the Zn(2+) binding site. Residue Asp-279 participates in substrate binding.

This sequence belongs to the metallo-dependent hydrolases superfamily. Adenosine and AMP deaminases family. Adenosine deaminase subfamily. Requires Zn(2+) as cofactor.

It carries out the reaction adenosine + H2O + H(+) = inosine + NH4(+). The enzyme catalyses 2'-deoxyadenosine + H2O + H(+) = 2'-deoxyinosine + NH4(+). Functionally, catalyzes the hydrolytic deamination of adenosine and 2-deoxyadenosine. In Shewanella sp. (strain MR-7), this protein is Adenosine deaminase.